Consider the following 139-residue polypeptide: Chorion protein S16 (139 aa).

The N-terminal stretch at methionine 1–alanine 21 is a signal peptide.

Belongs to the chorion protein S16 family.

The protein localises to the secreted. In terms of biological role, chorion membrane (egg shell) protein; plays a role in protecting the egg from the environment. In Drosophila virilis (Fruit fly), this protein is Chorion protein S16 (Cp16).